The following is a 384-amino-acid chain: Oxoeicosanoid receptor 1 (384 aa).

The segment at 1 to 21 (MELHNLSSPSPSLSSSVLPPS) is disordered. The Extracellular portion of the chain corresponds to 1 to 58 (MELHNLSSPSPSLSSSVLPPSFSPSPSSAPSAFTTVGGSSGGPCHPTSSSLVSAFLAP). Asn-5 is a glycosylation site (N-linked (GlcNAc...) asparagine). The segment covering 7–21 (SSPSPSLSSSVLPPS) has biased composition (low complexity). Residues 59 to 79 (ILALEFVLGLVGNSLALFIFC) form a helical membrane-spanning segment. The Cytoplasmic portion of the chain corresponds to 80–87 (IHTRPWTS). The helical transmembrane segment at 88–108 (NTVFLVSLVAADFLLISNLPL) threads the bilayer. Residues 109-129 (RVDYYLLHETWRFGAAACKVN) are Extracellular-facing. The cysteines at positions 126 and 198 are disulfide-linked. The helical transmembrane segment at 130–152 (LFMLSTNRTASVVFLTAIALNRY) threads the bilayer. The Cytoplasmic segment spans residues 153-172 (LKVVQPHHVLSRASVGAAAR). A helical membrane pass occupies residues 173 to 193 (VAGGLWVGILLLNGHLLLSTF). Over 194–215 (SGPSCLSYRVGTKPSASLRWHQ) the chain is Extracellular. A helical membrane pass occupies residues 216-236 (ALYLLEFFLPLALILFAIVSI). The Cytoplasmic segment spans residues 237-256 (GLTIRNRGLGGQAGPQRAMR). The chain crosses the membrane as a helical span at residues 257–277 (VLAMVVAVYTICFLPSIIFGM). At 278–297 (ASMVAFWLSACRSLDLCTQL) the chain is on the extracellular side. A helical membrane pass occupies residues 298–318 (FHGSLAFTYLNSVLDPVLYCF). Over 319–384 (SSPNFLHQSR…SLEKEGSSQG (66 aa)) the chain is Cytoplasmic.

Belongs to the G-protein coupled receptor 1 family. In terms of tissue distribution, expressed in various tissues except brain. Expression is more intense in liver, kidney, peripheral leukocyte, lung, and spleen than in other tissues. Highly expressed in eosinophils, neutrophils, and lung macrophages.

It is found in the membrane. Functionally, receptor for eicosanoids and polyunsaturated fatty acids such as 5-oxo-6E,8Z,11Z,14Z-eicosatetraenoic acid (5-OXO-ETE), 5(S)-hydroperoxy-6E,8Z,11Z,14Z-eicosatetraenoic acid (5(S)-HPETE) and arachidonic acid. Seems to be coupled to the G(i)/G(o), families of heteromeric G proteins. The polypeptide is Oxoeicosanoid receptor 1 (OXER1) (Homo sapiens (Human)).